A 444-amino-acid polypeptide reads, in one-letter code: E1B 55 kDa protein (444 aa).

Residues 1–42 are disordered; sequence MEQDSDLESGRATNQRPPRVRVRGAGVRGRGRVRRRALSEGQ. S438 and S439 each carry phosphoserine.

It belongs to the adenoviridae E1B 55 kDa protein family. In terms of assembly, interacts with host PML-4 and PML-5; this interaction promotes efficient subnuclear targeting of E1B-55K to PML nuclear bodies. Interacts with E4-ORF3 protein. Interacts with E4-ORF6 protein.

The protein resides in the host nucleus. The protein localises to the host cytoplasm. Plays a major role to prevent cellular inhibition of viral genome replication. Assembles an SCF-like E3 ubiquitin ligase complex based on the cellular proteins ELOB, ELOC, CUL5 and RBX1, in cooperation with viral E4orf6. This viral RING-type ligase ubiquitinates cellular substrates and targets them to proteasomal degradation: TP53/p53, LIG4, MRE11-RAD50-NBS1 (MRN) complex, ITGA3, DAXX and BLM. E1B-55K probably acts as the substrate-specific adapter of the SCF-like E3 ubiquitin ligase complex. Degradation of host TP53/p53 activity is essential for preventing E1A-induced TP53 accumulation that would otherwise lead to cell apoptosis and growth arrest. E1B-55K also inactivates TP53 transcription-factor activity by binding its transactivation domain. E1B-55K also functions as a SUMO1 E3 ligase for TP53 which causes the latter to be sequestered in promyelocytic leukemia (PML) nuclear bodies thereby contributing to maximal inhibition of TP53 function. This chain is E1B 55 kDa protein, found in Canis lupus familiaris (Dog).